Consider the following 213-residue polypeptide: Na(+)-translocating NADH-quinone reductase subunit D (213 aa).

The next 7 helical transmembrane spans lie at 21–41 (ILIA…VQTA), 42–62 (ITMG…VSLL), 77–97 (IIIS…FFDI), 101–121 (LSVF…SESL), 131–151 (FLDG…IGVI), 153–173 (ELFG…VYAS), and 183–203 (LSLM…IWLV).

This sequence belongs to the NqrDE/RnfAE family. In terms of assembly, composed of six subunits; NqrA, NqrB, NqrC, NqrD, NqrE and NqrF.

The protein resides in the cell inner membrane. It carries out the reaction a ubiquinone + n Na(+)(in) + NADH + H(+) = a ubiquinol + n Na(+)(out) + NAD(+). Functionally, NQR complex catalyzes the reduction of ubiquinone-1 to ubiquinol by two successive reactions, coupled with the transport of Na(+) ions from the cytoplasm to the periplasm. NqrA to NqrE are probably involved in the second step, the conversion of ubisemiquinone to ubiquinol. The protein is Na(+)-translocating NADH-quinone reductase subunit D of Chlamydia pneumoniae (Chlamydophila pneumoniae).